Here is a 465-residue protein sequence, read N- to C-terminus: Glutamate--tRNA ligase (465 aa).

The short motif at Pro11–Asn21 is the 'HIGH' region element. The disordered stretch occupies residues Gly118–Pro139. Residues Lys243–Arg247 carry the 'KMSKS' region motif. Lys246 provides a ligand contact to ATP.

The protein belongs to the class-I aminoacyl-tRNA synthetase family. Glutamate--tRNA ligase type 1 subfamily. In terms of assembly, monomer.

It is found in the cytoplasm. The enzyme catalyses tRNA(Glu) + L-glutamate + ATP = L-glutamyl-tRNA(Glu) + AMP + diphosphate. Functionally, catalyzes the attachment of glutamate to tRNA(Glu) in a two-step reaction: glutamate is first activated by ATP to form Glu-AMP and then transferred to the acceptor end of tRNA(Glu). This chain is Glutamate--tRNA ligase, found in Ralstonia pickettii (strain 12J).